Here is a 304-residue protein sequence, read N- to C-terminus: Transcription factor bHLH94 (304 aa).

The interval 86-107 is disordered; that stretch reads VESHPPPQHRRKRRRTRNCKNK. A compositionally biased stretch (basic residues) spans 92 to 104; that stretch reads PQHRRKRRRTRNC. Residues 112 to 163 enclose the bHLH domain; the sequence is NQRMTHIAVERNRRKQMNEYLAVLRSLMPSSYAQRGDQASIVGGAINYVKEL.

Homodimer. In terms of tissue distribution, expressed constitutively in roots, leaves, stems, and flowers.

Its subcellular location is the nucleus. In Arabidopsis thaliana (Mouse-ear cress), this protein is Transcription factor bHLH94 (BHLH94).